A 172-amino-acid chain; its full sequence is Peptide deformylase (172 aa).

Residues cysteine 94 and histidine 136 each coordinate Fe cation. The active site involves glutamate 137. Residue histidine 140 participates in Fe cation binding.

It belongs to the polypeptide deformylase family. Fe(2+) is required as a cofactor.

It catalyses the reaction N-terminal N-formyl-L-methionyl-[peptide] + H2O = N-terminal L-methionyl-[peptide] + formate. Its function is as follows. Removes the formyl group from the N-terminal Met of newly synthesized proteins. Requires at least a dipeptide for an efficient rate of reaction. N-terminal L-methionine is a prerequisite for activity but the enzyme has broad specificity at other positions. The sequence is that of Peptide deformylase from Pelagibacter ubique (strain HTCC1062).